The sequence spans 306 residues: Bacitracin transport ATP-binding protein BcrA (306 aa).

The ABC transporter domain occupies 5–233 (IKTTDLTKMY…NRKYLEFQLS (229 aa)). 37–44 (GRNGAGKT) is a binding site for ATP.

It belongs to the ABC transporter superfamily.

In terms of biological role, part of the binding-protein-dependent transport system for bacitracin that confer resistance to this antibiotic. Probably responsible for energy coupling to the transport system. The chain is Bacitracin transport ATP-binding protein BcrA (bcrA) from Bacillus licheniformis.